The following is a 403-amino-acid chain: Phosphoglycerate kinase (403 aa).

Residues 22–24 (DFN), arginine 37, 60–63 (HFGR), arginine 119, and arginine 152 contribute to the substrate site. Residues lysine 202, glutamate 324, and 354 to 357 (GGDT) contribute to the ATP site.

This sequence belongs to the phosphoglycerate kinase family. Monomer.

Its subcellular location is the cytoplasm. It carries out the reaction (2R)-3-phosphoglycerate + ATP = (2R)-3-phospho-glyceroyl phosphate + ADP. It participates in carbohydrate degradation; glycolysis; pyruvate from D-glyceraldehyde 3-phosphate: step 2/5. This is Phosphoglycerate kinase from Maricaulis maris (strain MCS10) (Caulobacter maris).